The chain runs to 269 residues: Ubiquinone/menaquinone biosynthesis C-methyltransferase UbiE (269 aa).

Residues T92, D113, and 141 to 142 (NA) each bind S-adenosyl-L-methionine.

It belongs to the class I-like SAM-binding methyltransferase superfamily. MenG/UbiE family.

It carries out the reaction a 2-demethylmenaquinol + S-adenosyl-L-methionine = a menaquinol + S-adenosyl-L-homocysteine + H(+). It catalyses the reaction a 2-methoxy-6-(all-trans-polyprenyl)benzene-1,4-diol + S-adenosyl-L-methionine = a 5-methoxy-2-methyl-3-(all-trans-polyprenyl)benzene-1,4-diol + S-adenosyl-L-homocysteine + H(+). It participates in quinol/quinone metabolism; menaquinone biosynthesis; menaquinol from 1,4-dihydroxy-2-naphthoate: step 2/2. It functions in the pathway cofactor biosynthesis; ubiquinone biosynthesis. Its function is as follows. Methyltransferase required for the conversion of demethylmenaquinol (DMKH2) to menaquinol (MKH2) and the conversion of 2-polyprenyl-6-methoxy-1,4-benzoquinol (DDMQH2) to 2-polyprenyl-3-methyl-6-methoxy-1,4-benzoquinol (DMQH2). The protein is Ubiquinone/menaquinone biosynthesis C-methyltransferase UbiE of Brucella suis (strain ATCC 23445 / NCTC 10510).